The primary structure comprises 580 residues: Proline--tRNA ligase (580 aa).

Belongs to the class-II aminoacyl-tRNA synthetase family. ProS type 1 subfamily. As to quaternary structure, homodimer.

It localises to the cytoplasm. The enzyme catalyses tRNA(Pro) + L-proline + ATP = L-prolyl-tRNA(Pro) + AMP + diphosphate. In terms of biological role, catalyzes the attachment of proline to tRNA(Pro) in a two-step reaction: proline is first activated by ATP to form Pro-AMP and then transferred to the acceptor end of tRNA(Pro). As ProRS can inadvertently accommodate and process non-cognate amino acids such as alanine and cysteine, to avoid such errors it has two additional distinct editing activities against alanine. One activity is designated as 'pretransfer' editing and involves the tRNA(Pro)-independent hydrolysis of activated Ala-AMP. The other activity is designated 'posttransfer' editing and involves deacylation of mischarged Ala-tRNA(Pro). The misacylated Cys-tRNA(Pro) is not edited by ProRS. In Maridesulfovibrio salexigens (strain ATCC 14822 / DSM 2638 / NCIMB 8403 / VKM B-1763) (Desulfovibrio salexigens), this protein is Proline--tRNA ligase.